The primary structure comprises 545 residues: Delta 8-(E)-sphingolipid desaturase (545 aa).

One can recognise a Cytochrome b5 heme-binding domain in the interval 1-82 (MASHTKDALL…MLAFQIGRIQ (82 aa)). Heme contacts are provided by H42 and H65. The segment at 97-124 (FRHYDENADSEEDDTSGQSQPPSPIFDA) is disordered. A helical membrane pass occupies residues 227–247 (LGWYSVSAVFLGCFWHQLVFS). A Histidine box-1 motif is present at residues 249–253 (HDAGH). The chain crosses the membrane as a helical span at residues 262-282 (VDSIIGILIADFLGGLSLGWW). The Histidine box-2 signature appears at 286 to 290 (HNVHH). The next 2 helical transmembrane spans lie at 382-402 (IAGQ…CSIP) and 408-428 (LSFL…ITLS). The Histidine box-3 signature appears at 470 to 474 (QAIHH).

It belongs to the fatty acid desaturase type 1 family.

The protein resides in the membrane. The enzyme catalyses an N-acylsphing-4-enine + 2 Fe(II)-[cytochrome b5] + O2 + 2 H(+) = a (4E,8E)-4-sphinga-4,8-dienine ceramide + 2 Fe(III)-[cytochrome b5] + 2 H2O. It participates in lipid metabolism; sphingolipid metabolism. Functionally, delta(8)-fatty-acid desaturase which introduces a double bond at the 8-position in the long-chain base (LCB) of ceramides. Required for the formation of the di-unsaturated sphingoid base (E,E)-sphinga-4,8-dienine during glucosylceramide (GluCer) biosynthesis. Plays an important role in conidiation. This chain is Delta 8-(E)-sphingolipid desaturase, found in Emericella nidulans (strain FGSC A4 / ATCC 38163 / CBS 112.46 / NRRL 194 / M139) (Aspergillus nidulans).